The primary structure comprises 690 residues: DNA ligase (690 aa).

NAD(+) is bound by residues 43 to 47 (DAEYD), 92 to 93 (SI), and E129. K131 functions as the N6-AMP-lysine intermediate in the catalytic mechanism. Residues R152, E188, K309, and K333 each coordinate NAD(+). C427, C430, C445, and C451 together coordinate Zn(2+). The region spanning 610-690 (VTPTPLSGKT…GLKELLDGHS (81 aa)) is the BRCT domain.

Belongs to the NAD-dependent DNA ligase family. LigA subfamily. Requires Mg(2+) as cofactor. The cofactor is Mn(2+).

It catalyses the reaction NAD(+) + (deoxyribonucleotide)n-3'-hydroxyl + 5'-phospho-(deoxyribonucleotide)m = (deoxyribonucleotide)n+m + AMP + beta-nicotinamide D-nucleotide.. Functionally, DNA ligase that catalyzes the formation of phosphodiester linkages between 5'-phosphoryl and 3'-hydroxyl groups in double-stranded DNA using NAD as a coenzyme and as the energy source for the reaction. It is essential for DNA replication and repair of damaged DNA. This chain is DNA ligase, found in Albidiferax ferrireducens (strain ATCC BAA-621 / DSM 15236 / T118) (Rhodoferax ferrireducens).